We begin with the raw amino-acid sequence, 430 residues long: Glutamate-1-semialdehyde 2,1-aminomutase (430 aa).

An N6-(pyridoxal phosphate)lysine modification is found at Lys265.

It belongs to the class-III pyridoxal-phosphate-dependent aminotransferase family. HemL subfamily. In terms of assembly, homodimer. The cofactor is pyridoxal 5'-phosphate.

It is found in the cytoplasm. The enzyme catalyses (S)-4-amino-5-oxopentanoate = 5-aminolevulinate. Its pathway is porphyrin-containing compound metabolism; protoporphyrin-IX biosynthesis; 5-aminolevulinate from L-glutamyl-tRNA(Glu): step 2/2. The sequence is that of Glutamate-1-semialdehyde 2,1-aminomutase from Shewanella oneidensis (strain ATCC 700550 / JCM 31522 / CIP 106686 / LMG 19005 / NCIMB 14063 / MR-1).